The sequence spans 735 residues: Stonin-1 (735 aa).

Positions 1–35 (MCSTNPGKWVTFDDDPAVQSSQKSKNFPLENQGVC) are disordered. The region spanning 275 to 408 (GWSFMLRIPE…KLPAVSKPKK (134 aa)) is the SHD domain. One can recognise an MHD domain in the interval 412 to 715 (EQEISLEIVD…ACYNIQVEIE (304 aa)).

This sequence belongs to the Stoned B family. Ubiquitous.

Its subcellular location is the cytoplasm. It localises to the membrane. Its function is as follows. May be involved in the endocytic machinery. The polypeptide is Stonin-1 (STON1) (Homo sapiens (Human)).